Reading from the N-terminus, the 162-residue chain is N5-carboxyaminoimidazole ribonucleotide mutase (162 aa).

Positions 11, 14, and 41 each coordinate substrate.

This sequence belongs to the AIR carboxylase family. Class I subfamily.

The catalysed reaction is 5-carboxyamino-1-(5-phospho-D-ribosyl)imidazole + H(+) = 5-amino-1-(5-phospho-D-ribosyl)imidazole-4-carboxylate. It participates in purine metabolism; IMP biosynthesis via de novo pathway; 5-amino-1-(5-phospho-D-ribosyl)imidazole-4-carboxylate from 5-amino-1-(5-phospho-D-ribosyl)imidazole (N5-CAIR route): step 2/2. Functionally, catalyzes the conversion of N5-carboxyaminoimidazole ribonucleotide (N5-CAIR) to 4-carboxy-5-aminoimidazole ribonucleotide (CAIR). This Brucella melitensis biotype 1 (strain ATCC 23456 / CCUG 17765 / NCTC 10094 / 16M) protein is N5-carboxyaminoimidazole ribonucleotide mutase.